A 209-amino-acid polypeptide reads, in one-letter code: Uracil phosphoribosyltransferase (209 aa).

5-phospho-alpha-D-ribose 1-diphosphate is bound by residues R79, R104, and 131-139 (DPMLATGGS). Uracil-binding positions include I194 and 199–201 (GDA). D200 is a 5-phospho-alpha-D-ribose 1-diphosphate binding site.

This sequence belongs to the UPRTase family. The cofactor is Mg(2+).

The enzyme catalyses UMP + diphosphate = 5-phospho-alpha-D-ribose 1-diphosphate + uracil. The protein operates within pyrimidine metabolism; UMP biosynthesis via salvage pathway; UMP from uracil: step 1/1. With respect to regulation, allosterically activated by GTP. Functionally, catalyzes the conversion of uracil and 5-phospho-alpha-D-ribose 1-diphosphate (PRPP) to UMP and diphosphate. The protein is Uracil phosphoribosyltransferase of Geobacillus kaustophilus (strain HTA426).